The sequence spans 257 residues: tRNA (guanine-N(1)-)-methyltransferase (257 aa).

S-adenosyl-L-methionine-binding positions include G117 and L137–L142.

It belongs to the RNA methyltransferase TrmD family. As to quaternary structure, homodimer.

It localises to the cytoplasm. The enzyme catalyses guanosine(37) in tRNA + S-adenosyl-L-methionine = N(1)-methylguanosine(37) in tRNA + S-adenosyl-L-homocysteine + H(+). Its function is as follows. Specifically methylates guanosine-37 in various tRNAs. The polypeptide is tRNA (guanine-N(1)-)-methyltransferase (Bordetella parapertussis (strain 12822 / ATCC BAA-587 / NCTC 13253)).